The sequence spans 222 residues: Germin-like protein subfamily 1 member 13 (222 aa).

The N-terminal stretch at 1 to 18 (MRVSKSLILITLSALVIS) is a signal peptide. An intrachain disulfide couples C32 to C49. Residues 63–214 (SGLNQAGSTN…AFQLDVNIVE (152 aa)) form the Cupin type-1 domain. N78 is a glycosylation site (N-linked (GlcNAc...) asparagine). Mn(2+)-binding residues include H111, H113, E118, and H160.

This sequence belongs to the germin family. Oligomer (believed to be a pentamer but probably hexamer).

It localises to the secreted. Its subcellular location is the extracellular space. It is found in the apoplast. May play a role in plant defense. Probably has no oxalate oxidase activity even if the active site is conserved. This chain is Germin-like protein subfamily 1 member 13 (GLP6), found in Arabidopsis thaliana (Mouse-ear cress).